A 150-amino-acid chain; its full sequence is 3-hydroxyacyl-[acyl-carrier-protein] dehydratase FabZ (150 aa).

Residue H51 is part of the active site.

The protein belongs to the thioester dehydratase family. FabZ subfamily.

The protein resides in the cytoplasm. The catalysed reaction is a (3R)-hydroxyacyl-[ACP] = a (2E)-enoyl-[ACP] + H2O. Its function is as follows. Involved in unsaturated fatty acids biosynthesis. Catalyzes the dehydration of short chain beta-hydroxyacyl-ACPs and long chain saturated and unsaturated beta-hydroxyacyl-ACPs. The chain is 3-hydroxyacyl-[acyl-carrier-protein] dehydratase FabZ from Geobacter metallireducens (strain ATCC 53774 / DSM 7210 / GS-15).